The chain runs to 185 residues: Elongation factor P (185 aa).

The protein belongs to the elongation factor P family.

The protein resides in the cytoplasm. It participates in protein biosynthesis; polypeptide chain elongation. Its function is as follows. Involved in peptide bond synthesis. Stimulates efficient translation and peptide-bond synthesis on native or reconstituted 70S ribosomes in vitro. Probably functions indirectly by altering the affinity of the ribosome for aminoacyl-tRNA, thus increasing their reactivity as acceptors for peptidyl transferase. This is Elongation factor P from Thermotoga petrophila (strain ATCC BAA-488 / DSM 13995 / JCM 10881 / RKU-1).